The chain runs to 387 residues: Flap endonuclease 1 (387 aa).

Residues 1–104 are N-domain; it reads MGILGLSKLI…GELAKRAERR (104 aa). Residue Asp34 coordinates Mg(2+). Residues Arg47 and Arg70 each coordinate DNA. Residues Asp86, Glu158, Glu160, Asp179, and Asp181 each contribute to the Mg(2+) site. Positions 122 to 253 are I-domain; that stretch reads GIEKFNRRLV…KRAIELINNY (132 aa). A DNA-binding site is contributed by Glu158. DNA contacts are provided by Gly231 and Asp233. Asp233 is a Mg(2+) binding site. The tract at residues 336 to 344 is interaction with PCNA; sequence TQVRLDSFF. The tract at residues 346–387 is disordered; that stretch reads TLPSTPNATNAAKRKAEEAKKSANNKKAKTSGGVGGRGRRPK.

This sequence belongs to the XPG/RAD2 endonuclease family. FEN1 subfamily. In terms of assembly, interacts with PCNA. Three molecules of FEN1 bind to one PCNA trimer with each molecule binding to one PCNA monomer. PCNA stimulates the nuclease activity without altering cleavage specificity. It depends on Mg(2+) as a cofactor. Post-translationally, phosphorylated. Phosphorylation upon DNA damage induces relocalization to the nuclear plasma.

It is found in the nucleus. The protein localises to the nucleolus. It localises to the nucleoplasm. The protein resides in the mitochondrion. Its function is as follows. Structure-specific nuclease with 5'-flap endonuclease and 5'-3' exonuclease activities involved in DNA replication and repair. During DNA replication, cleaves the 5'-overhanging flap structure that is generated by displacement synthesis when DNA polymerase encounters the 5'-end of a downstream Okazaki fragment. It enters the flap from the 5'-end and then tracks to cleave the flap base, leaving a nick for ligation. Also involved in the long patch base excision repair (LP-BER) pathway, by cleaving within the apurinic/apyrimidinic (AP) site-terminated flap. Acts as a genome stabilization factor that prevents flaps from equilibrating into structures that lead to duplications and deletions. Also possesses 5'-3' exonuclease activity on nicked or gapped double-stranded DNA, and exhibits RNase H activity. Also involved in replication and repair of rDNA and in repairing mitochondrial DNA. The sequence is that of Flap endonuclease 1 from Drosophila erecta (Fruit fly).